The following is a 120-amino-acid chain: Large ribosomal subunit protein bL17 (120 aa).

This sequence belongs to the bacterial ribosomal protein bL17 family. Part of the 50S ribosomal subunit. Contacts protein L32.

The chain is Large ribosomal subunit protein bL17 from Mesomycoplasma hyopneumoniae (strain 7448) (Mycoplasma hyopneumoniae).